The primary structure comprises 303 residues: uncharacterized protein (303 aa).

In terms of domain architecture, Fe2OG dioxygenase spans 173–300; that stretch reads KLPELLGQLN…RFTVNGWIRK (128 aa).

Fe(2+) is required as a cofactor. It depends on L-ascorbate as a cofactor.

This is an uncharacterized protein from Synechocystis sp. (strain ATCC 27184 / PCC 6803 / Kazusa).